Consider the following 389-residue polypeptide: MQIFWFLPTHGDSRYLGTSEGARPIDLAYLQQIAGAADQLGYEGVLIPTGRSCEDPWVIASSLIGATKNLKFLVAVRPGLHQPSLAARMAATFDRLSGGRLLVNLVTGGDQSELEGDGVYLDHAQRYEQSAEFIRIWREILARSHSGQAFDYEGRHLSVKGAKLLYPPVQEPYPPVWFGGSSAAAHELAAEQVDAYLTWGEPPAEVARKIADVRNRAARKGRTVEFGIRLHVIVRETEDAAWKAAEELISRVDDETVIRAQAAFARMDSEGQRRMAALHAGGARRSRAELEISPNLWAGVGLVRGGAGTALVGDPKTVAARIEEYAALGLDKFILSGYPHLEEAYRFAELVFPLLSRKAQSRLAGGSLSGPFGEVVANLDAPSRLASQS.

Belongs to the SsuD family.

The enzyme catalyses an alkanesulfonate + FMNH2 + O2 = an aldehyde + FMN + sulfite + H2O + 2 H(+). Catalyzes the desulfonation of aliphatic sulfonates. This Variovorax paradoxus (strain S110) protein is Alkanesulfonate monooxygenase.